The chain runs to 68 residues: Large ribosomal subunit protein bL33c (68 aa).

The protein belongs to the bacterial ribosomal protein bL33 family.

Its subcellular location is the plastid. The protein localises to the chloroplast. This chain is Large ribosomal subunit protein bL33c, found in Pinus koraiensis (Korean pine).